The sequence spans 217 residues: Large ribosomal subunit protein uL1 (217 aa).

This sequence belongs to the universal ribosomal protein uL1 family. As to quaternary structure, part of the 50S ribosomal subunit.

In terms of biological role, binds directly to 23S rRNA. Probably involved in E site tRNA release. Functionally, protein L1 is also a translational repressor protein, it controls the translation of its operon by binding to its mRNA. The chain is Large ribosomal subunit protein uL1 from Thermoplasma volcanium (strain ATCC 51530 / DSM 4299 / JCM 9571 / NBRC 15438 / GSS1).